The sequence spans 379 residues: tRNA 2-selenouridine synthase (379 aa).

One can recognise a Rhodanese domain in the interval 15-138; it reads FQQNIPLMDV…ARNYLIKQIE (124 aa). Cysteine 98 (S-selanylcysteine intermediate) is an active-site residue.

The protein belongs to the SelU family. Monomer.

It carries out the reaction 5-methylaminomethyl-2-thiouridine(34) in tRNA + selenophosphate + (2E)-geranyl diphosphate + H2O + H(+) = 5-methylaminomethyl-2-selenouridine(34) in tRNA + (2E)-thiogeraniol + phosphate + diphosphate. It catalyses the reaction 5-methylaminomethyl-2-thiouridine(34) in tRNA + (2E)-geranyl diphosphate = 5-methylaminomethyl-S-(2E)-geranyl-thiouridine(34) in tRNA + diphosphate. The enzyme catalyses 5-methylaminomethyl-S-(2E)-geranyl-thiouridine(34) in tRNA + selenophosphate + H(+) = 5-methylaminomethyl-2-(Se-phospho)selenouridine(34) in tRNA + (2E)-thiogeraniol. The catalysed reaction is 5-methylaminomethyl-2-(Se-phospho)selenouridine(34) in tRNA + H2O = 5-methylaminomethyl-2-selenouridine(34) in tRNA + phosphate. Its function is as follows. Involved in the post-transcriptional modification of the uridine at the wobble position (U34) of tRNA(Lys), tRNA(Glu) and tRNA(Gln). Catalyzes the conversion of 2-thiouridine (S2U-RNA) to 2-selenouridine (Se2U-RNA). Acts in a two-step process involving geranylation of 2-thiouridine (S2U) to S-geranyl-2-thiouridine (geS2U) and subsequent selenation of the latter derivative to 2-selenouridine (Se2U) in the tRNA chain. The protein is tRNA 2-selenouridine synthase of Bdellovibrio bacteriovorus (strain ATCC 15356 / DSM 50701 / NCIMB 9529 / HD100).